Reading from the N-terminus, the 274-residue chain is 3-methyl-2-oxobutanoate hydroxymethyltransferase (274 aa).

Mg(2+)-binding residues include Asp-49 and Asp-88. 3-methyl-2-oxobutanoate is bound by residues 49-50, Asp-88, and Lys-118; that span reads DS. Glu-120 contacts Mg(2+). Residue Glu-187 is the Proton acceptor of the active site.

Belongs to the PanB family. In terms of assembly, homodecamer; pentamer of dimers. Mg(2+) serves as cofactor.

The protein localises to the cytoplasm. It catalyses the reaction 3-methyl-2-oxobutanoate + (6R)-5,10-methylene-5,6,7,8-tetrahydrofolate + H2O = 2-dehydropantoate + (6S)-5,6,7,8-tetrahydrofolate. It participates in cofactor biosynthesis; (R)-pantothenate biosynthesis; (R)-pantoate from 3-methyl-2-oxobutanoate: step 1/2. Functionally, catalyzes the reversible reaction in which hydroxymethyl group from 5,10-methylenetetrahydrofolate is transferred onto alpha-ketoisovalerate to form ketopantoate. In Allorhizobium ampelinum (strain ATCC BAA-846 / DSM 112012 / S4) (Agrobacterium vitis (strain S4)), this protein is 3-methyl-2-oxobutanoate hydroxymethyltransferase.